The sequence spans 968 residues: A disintegrin and metalloproteinase with thrombospondin motifs 1 (968 aa).

Disordered stretches follow at residues 1-23 (MQPKVPLGSRKQKPCSDMGDVQR) and 177-253 (APAV…RKKR). Residues 1–48 (MQPKVPLGSRKQKPCSDMGDVQRAARSRGSLSAHMLLLLLASITMLLC) form the signal peptide. A propeptide spanning residues 49–253 (ARGAHGRPTE…SGPGSIRKKR (205 aa)) is cleaved from the precursor. The short motif at 204–211 (AKCGVMDD) is the Cysteine switch element. Cysteine 206 contributes to the Zn(2+) binding site. The segment covering 214 to 229 (LPTSDSRPESQNTRNQ) has biased composition (polar residues). The Peptidase M12B domain maps to 259–468 (RYVETMLVAD…GHGECLMDKP (210 aa)). Ca(2+) contacts are provided by glutamate 262, aspartate 345, and aspartate 352. Cystine bridges form between cysteine 334–cysteine 386, cysteine 363–cysteine 368, cysteine 380–cysteine 463, and cysteine 418–cysteine 447. A Zn(2+)-binding site is contributed by histidine 402. Glutamate 403 is an active-site residue. Histidine 406 and histidine 412 together coordinate Zn(2+). Ca(2+) contacts are provided by cysteine 463 and aspartate 466. The region spanning 477-559 (DLPGTLYDAN…TDMKHFATPV (83 aa)) is the Disintegrin domain. 4 cysteine pairs are disulfide-bonded: cysteine 489-cysteine 512, cysteine 500-cysteine 522, cysteine 507-cysteine 541, and cysteine 535-cysteine 546. N-linked (GlcNAc...) asparagine glycosylation occurs at asparagine 548. Residues 560–615 (HGSWGPWGPWGDCSRTCGGGVQYTMRECDNPVPKNGGKYCEGKRVRYRSCNIEDCP) form the TSP type-1 1 domain. Cystine bridges form between cysteine 572/cysteine 609, cysteine 576/cysteine 614, and cysteine 587/cysteine 599. 3 N-linked (GlcNAc...) asparagine glycosylation sites follow: asparagine 721, asparagine 765, and asparagine 783. Residues 726–850 (KKMSGIVTST…YFMKKKTESF (125 aa)) form a spacer region. TSP type-1 domains follow at residues 855-911 (TFSE…LPCP) and 912-968 (HWQV…TQCS). An N-linked (GlcNAc...) asparagine glycan is attached at asparagine 946.

Requires Zn(2+) as cofactor. The precursor is cleaved by a furin endopeptidase. Post-translationally, glycosylated. Can be O-fucosylated by POFUT2 on a serine or a threonine residue found within the consensus sequence C1-X(2)-(S/T)-C2-G of the TSP type-1 repeat domains where C1 and C2 are the first and second cysteine residue of the repeat, respectively. Fucosylated repeats can then be further glycosylated by the addition of a beta-1,3-glucose residue by the glucosyltransferase, B3GALTL. Fucosylation mediates the efficient secretion of ADAMTS family members. Can also be C-glycosylated with one or two mannose molecules on tryptophan residues within the consensus sequence W-X-X-W of the TPRs, and N-glycosylated. These other glycosylations can also facilitate secretion.

Its subcellular location is the secreted. The protein localises to the extracellular space. It is found in the extracellular matrix. Its function is as follows. Metalloprotease which cleaves aggrecan, a cartilage proteoglycan, at the '1691-Glu-|-Leu-1692' site (within the chondroitin sulfate attachment domain), and may be involved in its turnover. Also cleaves COMP. Has angiogenic inhibitor activity. May play a critical role in follicular rupture. The sequence is that of A disintegrin and metalloproteinase with thrombospondin motifs 1 (Adamts1) from Mus musculus (Mouse).